The primary structure comprises 138 residues: Glutaredoxin-like protein C5orf63 (138 aa).

An intrachain disulfide couples Cys41 to Cys44. Residues 55–64 (ENRQPYKDQK) show a composition bias toward basic and acidic residues. The segment at 55–88 (ENRQPYKDQKLPGTRRRRSPSSPSHPHMASQSGK) is disordered.

Belongs to the glutaredoxin family. YDR286C subfamily.

The sequence is that of Glutaredoxin-like protein C5orf63 (C5orf63) from Homo sapiens (Human).